A 264-amino-acid chain; its full sequence is 4-hydroxy-tetrahydrodipicolinate reductase (264 aa).

Position 8-13 (8-13 (GPRGKM)) interacts with NAD(+). Lysine 36 lines the NADP(+) pocket. NAD(+) contacts are provided by residues 97–99 (GTT) and 123–126 (APNF). Histidine 153 functions as the Proton donor/acceptor in the catalytic mechanism. Histidine 154 lines the (S)-2,3,4,5-tetrahydrodipicolinate pocket. The Proton donor role is filled by lysine 157. 163 to 164 (GT) provides a ligand contact to (S)-2,3,4,5-tetrahydrodipicolinate.

This sequence belongs to the DapB family.

The protein localises to the cytoplasm. The enzyme catalyses (S)-2,3,4,5-tetrahydrodipicolinate + NAD(+) + H2O = (2S,4S)-4-hydroxy-2,3,4,5-tetrahydrodipicolinate + NADH + H(+). It catalyses the reaction (S)-2,3,4,5-tetrahydrodipicolinate + NADP(+) + H2O = (2S,4S)-4-hydroxy-2,3,4,5-tetrahydrodipicolinate + NADPH + H(+). Its pathway is amino-acid biosynthesis; L-lysine biosynthesis via DAP pathway; (S)-tetrahydrodipicolinate from L-aspartate: step 4/4. Its function is as follows. Catalyzes the conversion of 4-hydroxy-tetrahydrodipicolinate (HTPA) to tetrahydrodipicolinate. In Halalkalibacterium halodurans (strain ATCC BAA-125 / DSM 18197 / FERM 7344 / JCM 9153 / C-125) (Bacillus halodurans), this protein is 4-hydroxy-tetrahydrodipicolinate reductase.